We begin with the raw amino-acid sequence, 122 residues long: UPF0102 protein ECH_0093 (122 aa).

The protein belongs to the UPF0102 family.

The polypeptide is UPF0102 protein ECH_0093 (Ehrlichia chaffeensis (strain ATCC CRL-10679 / Arkansas)).